Here is a 973-residue protein sequence, read N- to C-terminus: Splicing regulator ARVCF (973 aa).

The segment at 95–123 (VTVEEDPGTPTSHVSIVTSEDGTTRRTET) is disordered. Phosphothreonine is present on residues T103 and T105. Residues 103–115 (TPTSHVSIVTSED) are compositionally biased toward polar residues. Position 171 is an omega-N-methylarginine (R171). 2 disordered regions span residues 233–254 (RREA…LPEH) and 267–331 (RSLA…QPER). Residue S268 is modified to Phosphoserine. The span at 271 to 281 (ADDEGGPDLEP) shows a compositional bias: acidic residues. Basic and acidic residues predominate over residues 289-303 (RRPEYGRGLRARALE). S333, S336, S344, and S346 each carry phosphoserine. ARM repeat units lie at residues 349–388 (STRK…HLCF), 391–430 (EGIK…NLSY), 434–468 (ADNK…VTGT), 469–509 (LWNL…NEDS), 527–566 (LRNV…DTDN), and 576–623 (MRNL…GKKA). A disordered region spans residues 593–623 (YQEVEPGIPGSAATSQRRRKDDASCFGGKKA). S607 carries the phosphoserine modification. The short motif at 608 to 624 (QRRRKDDASCFGGKKAK) is the Nuclear localization signal element. T637 bears the Phosphothreonine mark. ARM repeat units follow at residues 641 to 681 (PKRT…AAGA), 694 to 733 (TYIR…NLSL), 734 to 776 (DQRN…AVLN), and 777 to 821 (TIHE…SHVL). The interval 771–955 (VVAVLNTIHE…VLGPGAPPFC (185 aa)) is required for interaction with RNA-binding proteins DDX5, HNRNPH2 and SRSF1 and with mRNAs. The disordered stretch occupies residues 844-926 (FQSASTAKGP…KELLKGPGPA (83 aa)). Residue S865 is modified to Phosphoserine. T866 carries the phosphothreonine modification. Positions 872-881 (KNLDGEKSTT) are enriched in basic and acidic residues.

It belongs to the beta-catenin family. In terms of assembly, component of a ribonucleoprotein complex containing mRNAs and RNA-binding proteins including DDX5, HNRNPH2 and SRSF1 as well as ARVCF. Interacts (via the extreme C-terminus) with FRMPD2 (via the PDZ 2 domain). Interacts with CCDC85B. In terms of tissue distribution, expressed in optic nerve sheath envelope (at protein level). Expressed in heart (at protein level).

It localises to the cell junction. It is found in the adherens junction. The protein resides in the nucleus. The protein localises to the cytoplasm. Contributes to the regulation of alternative splicing of pre-mRNAs. The polypeptide is Splicing regulator ARVCF (Rattus norvegicus (Rat)).